The primary structure comprises 689 residues: Protein asunder (689 aa).

A coiled-coil region spans residues 521–550 (NGARLKLSKAKDQYRLLYRELEQLIQLNAT). Disordered stretches follow at residues 591-619 (SPER…SKRR) and 665-689 (GTKD…SVRS). Positions 599-614 (SSVGASGSSNSNSLLK) are enriched in low complexity. The short motif at 613 to 619 (LKASKRR) is the Nuclear localization signal (NLS) element.

This sequence belongs to the Integrator subunit 13 family. As to quaternary structure, belongs to the multiprotein complex Integrator, at least composed of IntS1, IntS2, IntS3, IntS4, omd/IntS5, IntS6, defl/IntS7, IntS8, IntS9, IntS10, IntS11, IntS12, asun/IntS13, IntS14 and IntS15. The core complex associates with protein phosphatase 2A subunits mts/PP2A and Pp2A-29B, to form the Integrator-PP2A (INTAC) complex. In terms of processing, phosphorylated.

The protein resides in the nucleus. It localises to the cytoplasm. It is found in the perinuclear region. Component of the integrator complex, a multiprotein complex that terminates RNA polymerase II (Pol II) transcription in the promoter-proximal region of genes. The integrator complex provides a quality checkpoint during transcription elongation by driving premature transcription termination of transcripts that are unfavorably configured for transcriptional elongation: the complex terminates transcription by (1) catalyzing dephosphorylation of the C-terminal domain (CTD) of Pol II subunit Polr2A/Rbp1 and Spt5, and (2) degrading the exiting nascent RNA transcript via endonuclease activity. The integrator complex is also involved in the 3'-end processing of the U7 snRNA, and also the spliceosomal snRNAs U1, U2, U4 and U5. In Drosophila sechellia (Fruit fly), this protein is Protein asunder (asun).